The following is a 261-amino-acid chain: Kallikrein-1 (261 aa).

Positions 1–18 (MWFLILFLALSLGRNDAA) are cleaved as a signal peptide. The propeptide at 19–24 (PPVQSR) is activation peptide. The region spanning 25 to 258 (VVGGYNCEMN…FTPWIKEVMK (234 aa)) is the Peptidase S1 domain. 5 cysteine pairs are disulfide-bonded: cysteine 31/cysteine 173, cysteine 50/cysteine 66, cysteine 152/cysteine 219, cysteine 184/cysteine 198, and cysteine 209/cysteine 234. Histidine 65 acts as the Charge relay system in catalysis. The N-linked (GlcNAc...) asparagine glycan is linked to asparagine 108. Residue aspartate 120 is the Charge relay system of the active site. Serine 213 acts as the Charge relay system in catalysis.

Belongs to the peptidase S1 family. Kallikrein subfamily. In terms of tissue distribution, high levels in pancreas, submaxillary and parotid glands, spleen, and kidney.

It catalyses the reaction Preferential cleavage of Arg-|-Xaa bonds in small molecule substrates. Highly selective action to release kallidin (lysyl-bradykinin) from kininogen involves hydrolysis of Met-|-Xaa or Leu-|-Xaa.. The sequence is that of Kallikrein-1 (Ngfg) from Rattus norvegicus (Rat).